Reading from the N-terminus, the 1395-residue chain is G-protein coupled receptor-associated sorting protein 1 (1395 aa).

Disordered regions lie at residues 1-25 (MTGA…VVGG), 45-83 (QIMP…AKAI), and 269-288 (TNTW…FRSK). Residues 269 to 281 (TNTWSGPREDPNS) are compositionally biased toward basic and acidic residues. Serine 297 is subject to Phosphoserine. The interval 446-469 (SMGTGASSKSRPRTDGERIGDSLF) is disordered. Positions 457 to 469 (PRTDGERIGDSLF) are enriched in basic and acidic residues. 2 positions are modified to phosphoserine: serine 631 and serine 899. Residues 899 to 1395 (SETEEETIFG…QNDPEGDQEN (497 aa)) are OPRD1-binding.

Belongs to the GPRASP family. In terms of assembly, interacts with cytoplasmic tails of a variety of G-protein coupled receptors such as D2 dopamine receptor/DRD2, delta opioid receptor/OPRD1, beta-2 adrenergic receptor/ADRB2 and D4 dopamine receptor/DRD4. Interacts with PER1. Interacts with BECN2; the interaction is direct. In terms of tissue distribution, expressed in the brain, with lower expression in medulla, spinal cord and substantia nigra.

The protein resides in the cytoplasm. Its function is as follows. Modulates lysosomal sorting and functional down-regulation of a variety of G-protein coupled receptors. Targets receptors for degradation in lysosomes via its interaction with BECN2. This chain is G-protein coupled receptor-associated sorting protein 1 (GPRASP1), found in Homo sapiens (Human).